The sequence spans 513 residues: Maturase K (513 aa).

The protein belongs to the intron maturase 2 family. MatK subfamily.

The protein resides in the plastid. Its subcellular location is the chloroplast. In terms of biological role, usually encoded in the trnK tRNA gene intron. Probably assists in splicing its own and other chloroplast group II introns. The polypeptide is Maturase K (Byblis liniflora (Carnivorous plant)).